Consider the following 545-residue polypeptide: 1,3-beta-glucanosyltransferase ARB_07487 (545 aa).

The signal sequence occupies residues 1–19 (MKFSSLAAATALVAGSVVA). N51 and N69 each carry an N-linked (GlcNAc...) asparagine glycan. C88 and C117 form a disulfide bridge. (1,3-beta-D-glucosyl)n contacts are provided by residues Y106, 133–141 (SEPSTSIIR), N174, and E175. E175 serves as the catalytic Proton donor. Residue N179 is glycosylated (N-linked (GlcNAc...) asparagine). Residues D216 and R221 each coordinate (1,3-beta-D-glucosyl)n. Cystine bridges form between C230/C363, C248/C279, C384/C437, C393/C464, and C412/C419. Catalysis depends on E276, which acts as the Nucleophile. Y308 contributes to the (1,3-beta-D-glucosyl)n binding site. Residues 493 to 513 (GTGSVTSAPGSGGNKPDQGAA) are disordered. The GPI-anchor amidated alanine moiety is linked to residue A512. The propeptide at 513 to 545 (ASTISAPSVNLGIVKLGAYIFCAVLAGAGMILI) is removed in mature form.

The protein belongs to the glycosyl hydrolase 72 family. The GPI-anchor is attached to the protein in the endoplasmic reticulum and serves to target the protein to the cell surface. There, the glucosamine-inositol phospholipid moiety is cleaved off and the GPI-modified mannoprotein is covalently attached via its lipidless GPI glycan remnant to the 1,6-beta-glucan of the outer cell wall layer.

It is found in the secreted. Its subcellular location is the cell membrane. The protein localises to the cell wall. Functionally, splits internally a 1,3-beta-glucan molecule and transfers the newly generated reducing end (the donor) to the non-reducing end of another 1,3-beta-glucan molecule (the acceptor) forming a 1,3-beta linkage, resulting in the elongation of 1,3-beta-glucan chains in the cell wall. Involved in cell wall biosynthesis and morphogenesis. The polypeptide is 1,3-beta-glucanosyltransferase ARB_07487 (Arthroderma benhamiae (strain ATCC MYA-4681 / CBS 112371) (Trichophyton mentagrophytes)).